Consider the following 485-residue polypeptide: Glutamate--tRNA ligase (485 aa).

Residues 11 to 21 (PSPTGHLHIGN) carry the 'HIGH' region motif. Positions 252–256 (KLSKR) match the 'KMSKS' region motif. ATP is bound at residue Lys-255.

The protein belongs to the class-I aminoacyl-tRNA synthetase family. Glutamate--tRNA ligase type 1 subfamily. Monomer.

Its subcellular location is the cytoplasm. The enzyme catalyses tRNA(Glu) + L-glutamate + ATP = L-glutamyl-tRNA(Glu) + AMP + diphosphate. Its function is as follows. Catalyzes the attachment of glutamate to tRNA(Glu) in a two-step reaction: glutamate is first activated by ATP to form Glu-AMP and then transferred to the acceptor end of tRNA(Glu). The polypeptide is Glutamate--tRNA ligase (Bacillus licheniformis (strain ATCC 14580 / DSM 13 / JCM 2505 / CCUG 7422 / NBRC 12200 / NCIMB 9375 / NCTC 10341 / NRRL NRS-1264 / Gibson 46)).